The following is a 328-amino-acid chain: Ferredoxin--NADP reductase (328 aa).

7 residues coordinate FAD: Glu36, Gln44, Tyr49, Val89, Phe123, Asp284, and Thr324.

The protein belongs to the ferredoxin--NADP reductase type 2 family. In terms of assembly, homodimer. FAD is required as a cofactor.

It carries out the reaction 2 reduced [2Fe-2S]-[ferredoxin] + NADP(+) + H(+) = 2 oxidized [2Fe-2S]-[ferredoxin] + NADPH. This chain is Ferredoxin--NADP reductase, found in Lacticaseibacillus paracasei (strain ATCC 334 / BCRC 17002 / CCUG 31169 / CIP 107868 / KCTC 3260 / NRRL B-441) (Lactobacillus paracasei).